The chain runs to 201 residues: Probable GTP-binding protein EngB (201 aa).

In terms of domain architecture, EngB-type G spans 23-196 (TGPEIALAGR…HEAVEEILSM (174 aa)). Residues 31–38 (GRSNVGKS), 58–62 (GKTQM), 76–79 (DLPG), 143–146 (TKAD), and 175–177 (YSA) contribute to the GTP site. Positions 38 and 60 each coordinate Mg(2+).

Belongs to the TRAFAC class TrmE-Era-EngA-EngB-Septin-like GTPase superfamily. EngB GTPase family. The cofactor is Mg(2+).

Functionally, necessary for normal cell division and for the maintenance of normal septation. The polypeptide is Probable GTP-binding protein EngB (Desulfitobacterium hafniense (strain DSM 10664 / DCB-2)).